A 279-amino-acid polypeptide reads, in one-letter code: Aspartate/glutamate leucyltransferase (279 aa).

The segment at 245 to 279 (ARERGARPPRGPGALKDACDLPLSDAQPADIEDLD) is disordered.

Belongs to the R-transferase family. Bpt subfamily.

It localises to the cytoplasm. The enzyme catalyses N-terminal L-glutamyl-[protein] + L-leucyl-tRNA(Leu) = N-terminal L-leucyl-L-glutamyl-[protein] + tRNA(Leu) + H(+). It catalyses the reaction N-terminal L-aspartyl-[protein] + L-leucyl-tRNA(Leu) = N-terminal L-leucyl-L-aspartyl-[protein] + tRNA(Leu) + H(+). Functions in the N-end rule pathway of protein degradation where it conjugates Leu from its aminoacyl-tRNA to the N-termini of proteins containing an N-terminal aspartate or glutamate. This is Aspartate/glutamate leucyltransferase from Caulobacter vibrioides (strain ATCC 19089 / CIP 103742 / CB 15) (Caulobacter crescentus).